The following is a 375-amino-acid chain: Pectate lyase C (375 aa).

The first 22 residues, 1 to 22, serve as a signal peptide directing secretion; that stretch reads MKSLITPITAGLLLALSQPLLA. An intrachain disulfide couples Cys-94 to Cys-177. Positions 151, 153, 188, and 192 each coordinate Ca(2+). Arg-240 is a catalytic residue. A disulfide bridge connects residues Cys-351 and Cys-374.

It belongs to the polysaccharide lyase 1 family. PLADES subfamily. It depends on Ca(2+) as a cofactor.

The protein localises to the secreted. The enzyme catalyses Eliminative cleavage of (1-&gt;4)-alpha-D-galacturonan to give oligosaccharides with 4-deoxy-alpha-D-galact-4-enuronosyl groups at their non-reducing ends.. It functions in the pathway glycan metabolism; pectin degradation; 2-dehydro-3-deoxy-D-gluconate from pectin: step 2/5. In terms of biological role, involved in maceration and soft-rotting of plant tissue. This Dickeya chrysanthemi (Pectobacterium chrysanthemi) protein is Pectate lyase C.